A 986-amino-acid polypeptide reads, in one-letter code: Isoleucine--tRNA ligase (986 aa).

The short motif at 534–538 (EMHKS) is the 'KMSKS' region element. Lys537 provides a ligand contact to ATP.

This sequence belongs to the class-I aminoacyl-tRNA synthetase family. IleS type 2 subfamily. Monomer. It depends on Zn(2+) as a cofactor.

The protein resides in the cytoplasm. The catalysed reaction is tRNA(Ile) + L-isoleucine + ATP = L-isoleucyl-tRNA(Ile) + AMP + diphosphate. In terms of biological role, catalyzes the attachment of isoleucine to tRNA(Ile). As IleRS can inadvertently accommodate and process structurally similar amino acids such as valine, to avoid such errors it has two additional distinct tRNA(Ile)-dependent editing activities. One activity is designated as 'pretransfer' editing and involves the hydrolysis of activated Val-AMP. The other activity is designated 'posttransfer' editing and involves deacylation of mischarged Val-tRNA(Ile). This Saccharolobus solfataricus (strain ATCC 35092 / DSM 1617 / JCM 11322 / P2) (Sulfolobus solfataricus) protein is Isoleucine--tRNA ligase (ileS).